A 342-amino-acid polypeptide reads, in one-letter code: N-acetyl-gamma-glutamyl-phosphate reductase (342 aa).

Cys147 is an active-site residue.

It belongs to the NAGSA dehydrogenase family. Type 1 subfamily.

Its subcellular location is the cytoplasm. The enzyme catalyses N-acetyl-L-glutamate 5-semialdehyde + phosphate + NADP(+) = N-acetyl-L-glutamyl 5-phosphate + NADPH + H(+). It participates in amino-acid biosynthesis; L-arginine biosynthesis; N(2)-acetyl-L-ornithine from L-glutamate: step 3/4. In terms of biological role, catalyzes the NADPH-dependent reduction of N-acetyl-5-glutamyl phosphate to yield N-acetyl-L-glutamate 5-semialdehyde. The protein is N-acetyl-gamma-glutamyl-phosphate reductase of Campylobacter jejuni subsp. jejuni serotype O:6 (strain 81116 / NCTC 11828).